We begin with the raw amino-acid sequence, 608 residues long: Cilia- and flagella-associated protein 100 (608 aa).

The segment covering 1–17 has biased composition (polar residues); sequence MSETLSNIVSKNMTNDK. Positions 1 to 57 are disordered; that stretch reads MSETLSNIVSKNMTNDKNSLESMNISSSSSAEENPKKQAKKXKERGPDPSANPFHLS. A compositionally biased stretch (low complexity) spans 20 to 32; that stretch reads LESMNISSSSSAE. 2 coiled-coil regions span residues 164 to 196 and 230 to 257; these read TLDCKRREIQRLETLATKEEARLQQAEKSLAKD and LEIRDLTTQIVNIKSEISRFEDTLQHYK. Disordered regions lie at residues 291–320 and 339–377; these read ASKDGSVNSTPGDKGPGIKGKASSVWAKEG and LSSPQQGSQPSESSGGNSRGSNSPIPLTQEDTDSDGEEP. A compositionally biased stretch (low complexity) spans 339 to 361; the sequence is LSSPQQGSQPSESSGGNSRGSNS. Coiled coils occupy residues 385–435 and 500–575; these read QQLL…QLKQ and TVQM…RGRT.

The protein belongs to the CFAP100 family.

It is found in the cytoplasm. The protein resides in the cytoskeleton. It localises to the cilium axoneme. In terms of biological role, may play a role in ciliary/flagellar motility by regulating the assembly and the activity of axonemal inner dynein arm. This Macaca fascicularis (Crab-eating macaque) protein is Cilia- and flagella-associated protein 100.